The chain runs to 628 residues: MMFNEMGMCGNMDFFSSGSLGEVDFCPVPQAEPDSIVEDDYTDDEIDVDELERRMWRDKMRLKRLKEQDKGKEGVDAAKQRQSQEQARRKKMSRAQDGILKYMLKMMEVCKAQGFVYGIIPENGKPVTGASDNLREWWKDKVRFDRNGPAAITKYQAENNIPGIHEGNNPIGPTPHTLQELQDTTLGSLLSALMQHCDPPQRRFPLEKGVPPPWWPNGKEDWWPQLGLPKDQGPAPYKKPHDLKKAWKVGVLTAVIKHMFPDIAKIRKLVRQSKCLQDKMTAKESATWLAIINQEESLARELYPESCPPLSLSGGSCSLLMNDCSQYDVEGFEKESHYEVEELKPEKVMNSSNFGMVAKMHDFPVKEEVPAGNSEFMRKRKPNRDLNTIMDRTVFTCENLGCAHSEISRGFLDRNSRDNHQLACPHRDSRLPYGAAPSRFHVNEVKPVVGFPQPRPVNSVAQPIDLTGIVPEDGQKMISELMSMYDRNVQSNQTSMVMENQSVSLLQPTVHNHQEHLQFPGNMVEGSFFEDLNIPNRANNNNSSNNQTFFQGNNNNNNVFKFDTADHNNFEAAHNNNNNSSGNRFQLVFDSTPFDMASFDYRDDMSMPGVVGTMDGMQQKQQDVSIWF.

A coiled-coil region spans residues 38–68; sequence EDDYTDDEIDVDELERRMWRDKMRLKRLKEQ. Residues 66-79 are compositionally biased toward basic and acidic residues; it reads KEQDKGKEGVDAAK. The interval 66 to 92 is disordered; it reads KEQDKGKEGVDAAKQRQSQEQARRKKM. The tract at residues 174–306 is DNA-binding domain; sequence TPHTLQELQD…SLARELYPES (133 aa).

This sequence belongs to the EIN3 family. In terms of assembly, acts as a homodimer to bind the primary ethylene response element. Interacts with TAF12B. Interacts with KIN10. Binds to ENAP1 in the presence of ethylene; this reaction facilitates its association with histone. Phosphorylated by KIN10.

It localises to the nucleus. Activated by phosphorylation by MPK3 and MPK6. Down-regulated by KIN10 that controls its protein stability under a phosphorylation-dependent manner. Satnilitzed during hypoxia (e.g. submergences) via a ceramides-triggered and CTR1-dependent manner. In terms of biological role, transcription factor acting as a positive regulator in the ethylene response pathway, by promoting histone acetylation in an ENAP1-dependent manner, thus accelerating the expression of ethylene-responsive genes. Binds DNA. Is required for ethylene responsiveness in adult plant tissues. Binds a primary ethylene response element present in the ETHYLENE-RESPONSE-FACTOR1 promoter with consequence to activate the transcription of this gene. The polypeptide is Protein ETHYLENE INSENSITIVE 3 (Arabidopsis thaliana (Mouse-ear cress)).